Reading from the N-terminus, the 241-residue chain is 6-hydroxymethyl-7,8-dihydropterin pyrophosphokinase (241 aa).

This sequence belongs to the archaeal 6-HMPDK family. Requires Mg(2+) as cofactor.

The enzyme catalyses 6-hydroxymethyl-7,8-dihydropterin + ATP = (7,8-dihydropterin-6-yl)methyl diphosphate + AMP + H(+). The protein operates within cofactor biosynthesis; 5,6,7,8-tetrahydromethanopterin biosynthesis. Its function is as follows. Catalyzes the transfer of diphosphate from ATP to 6-hydroxymethyl-7,8-dihydropterin (6-HMD), leading to 6-hydroxymethyl-7,8-dihydropterin diphosphate (6-HMDP). The chain is 6-hydroxymethyl-7,8-dihydropterin pyrophosphokinase from Methanocaldococcus jannaschii (strain ATCC 43067 / DSM 2661 / JAL-1 / JCM 10045 / NBRC 100440) (Methanococcus jannaschii).